Consider the following 341-residue polypeptide: S-adenosylmethionine:tRNA ribosyltransferase-isomerase (341 aa).

It belongs to the QueA family. Monomer.

It is found in the cytoplasm. The catalysed reaction is 7-aminomethyl-7-carbaguanosine(34) in tRNA + S-adenosyl-L-methionine = epoxyqueuosine(34) in tRNA + adenine + L-methionine + 2 H(+). The protein operates within tRNA modification; tRNA-queuosine biosynthesis. Its function is as follows. Transfers and isomerizes the ribose moiety from AdoMet to the 7-aminomethyl group of 7-deazaguanine (preQ1-tRNA) to give epoxyqueuosine (oQ-tRNA). The polypeptide is S-adenosylmethionine:tRNA ribosyltransferase-isomerase (Staphylococcus aureus (strain USA300)).